We begin with the raw amino-acid sequence, 426 residues long: Gamma-glutamyl phosphate reductase (426 aa).

The protein belongs to the gamma-glutamyl phosphate reductase family.

Its subcellular location is the cytoplasm. It catalyses the reaction L-glutamate 5-semialdehyde + phosphate + NADP(+) = L-glutamyl 5-phosphate + NADPH + H(+). Its pathway is amino-acid biosynthesis; L-proline biosynthesis; L-glutamate 5-semialdehyde from L-glutamate: step 2/2. Functionally, catalyzes the NADPH-dependent reduction of L-glutamate 5-phosphate into L-glutamate 5-semialdehyde and phosphate. The product spontaneously undergoes cyclization to form 1-pyrroline-5-carboxylate. The sequence is that of Gamma-glutamyl phosphate reductase from Ralstonia pickettii (strain 12J).